We begin with the raw amino-acid sequence, 166 residues long: Phosphopantetheine adenylyltransferase (166 aa).

T10 is a substrate binding site. Residues 10 to 11 and H18 contribute to the ATP site; that span reads TF. Positions 42, 74, and 88 each coordinate substrate. Residues 89–91, E99, and 124–130 each bind ATP; these read GLR and NSFISSS.

It belongs to the bacterial CoaD family. As to quaternary structure, homohexamer. The cofactor is Mg(2+).

The protein resides in the cytoplasm. It catalyses the reaction (R)-4'-phosphopantetheine + ATP + H(+) = 3'-dephospho-CoA + diphosphate. Its pathway is cofactor biosynthesis; coenzyme A biosynthesis; CoA from (R)-pantothenate: step 4/5. In terms of biological role, reversibly transfers an adenylyl group from ATP to 4'-phosphopantetheine, yielding dephospho-CoA (dPCoA) and pyrophosphate. This is Phosphopantetheine adenylyltransferase from Idiomarina loihiensis (strain ATCC BAA-735 / DSM 15497 / L2-TR).